Reading from the N-terminus, the 488-residue chain is Putative BPI/LBP family protein At1g04970 (488 aa).

The first 24 residues, 1–24, serve as a signal peptide directing secretion; it reads MDVGRCFLFLLLPSFFFLPSQTQS. Asn-79, Asn-109, Asn-231, Asn-242, and Asn-341 each carry an N-linked (GlcNAc...) asparagine glycan.

This sequence belongs to the BPI/LBP/Plunc superfamily. BPI/LBP (TC 1.C.40) family.

The protein is Putative BPI/LBP family protein At1g04970 of Arabidopsis thaliana (Mouse-ear cress).